Here is a 505-residue protein sequence, read N- to C-terminus: Aminoaldehyde dehydrogenase 2 (505 aa).

2 residues coordinate Na(+): Ile-31 and Asp-99. NAD(+) is bound by residues 159 to 161 (TPW) and 185 to 188 (KPSE). Residue Leu-189 participates in Na(+) binding. 238–242 (GSGPT) contributes to the NAD(+) binding site. Glu-260 serves as the catalytic Proton acceptor. Position 261 (Leu-261) interacts with NAD(+). Catalysis depends on Cys-295, which acts as the Nucleophile. The NAD(+) site is built by Glu-394 and Trp-460.

Belongs to the aldehyde dehydrogenase family. As to quaternary structure, forms homodimers.

It catalyses the reaction 4-aminobutanal + NAD(+) + H2O = 4-aminobutanoate + NADH + 2 H(+). It carries out the reaction 3-aminopropanal + NAD(+) + H2O = beta-alanine + NADH + 2 H(+). The enzyme catalyses 4-(trimethylamino)butanal + NAD(+) + H2O = 4-(trimethylamino)butanoate + NADH + 2 H(+). The catalysed reaction is 4-guanidinobutanal + NAD(+) + H2O = 4-guanidinobutanoate + NADH + 2 H(+). The protein operates within amine and polyamine biosynthesis; betaine biosynthesis via choline pathway; betaine from betaine aldehyde: step 1/1. Dehydrogenase that catalyzes the oxidation of several aminoaldehydes. Metabolizes and detoxifies aldehyde products of polyamine degradation to non-toxic amino acids. Catalyzes the oxidation of 4-aminobutanal and 3-aminopropanal to 4-aminobutanoate and beta-alanine, respectively. Catalyzes the oxidation of 4-(trimethylamino)butanal and 4-guanidinobutanal to 4-trimethylammoniobutanoate and 4-guanidinobutanoate, respectively. In Solanum lycopersicum (Tomato), this protein is Aminoaldehyde dehydrogenase 2.